The primary structure comprises 376 residues: Glutamate 5-kinase (376 aa).

Lysine 17 contacts ATP. Positions 57, 144, and 156 each coordinate substrate. Position 176–177 (176–177 (TD)) interacts with ATP. In terms of domain architecture, PUA spans 283–361 (KGQLVLDEGA…SEINQLLGYS (79 aa)).

It belongs to the glutamate 5-kinase family.

Its subcellular location is the cytoplasm. It catalyses the reaction L-glutamate + ATP = L-glutamyl 5-phosphate + ADP. Its pathway is amino-acid biosynthesis; L-proline biosynthesis; L-glutamate 5-semialdehyde from L-glutamate: step 1/2. Catalyzes the transfer of a phosphate group to glutamate to form L-glutamate 5-phosphate. This Hydrogenovibrio crunogenus (strain DSM 25203 / XCL-2) (Thiomicrospira crunogena) protein is Glutamate 5-kinase.